A 406-amino-acid chain; its full sequence is Tubby-like F-box protein 11 (406 aa).

One can recognise an F-box domain in the interval 53-108; sequence SCWTQLPPELLREVLARVEESEGWWPRRRDVVACAGVCRSWRGIVREIVRTPEASG.

It belongs to the TUB family. Ubiquitous.

The chain is Tubby-like F-box protein 11 (TULP11) from Oryza sativa subsp. japonica (Rice).